A 230-amino-acid chain; its full sequence is MATGKRLKKSREGIDRNKLYPIADAIRMVKERATSKFDETIEIAMNLGVDPRHADQMVRGVVTLPNGTGRTLRVGVFARGAKAEEAKAAGADVVGAEDLVETVQGGTIAFDRCIATPDMMPLVGRLGKVLGPRGMMPNPKIGTVTMDVAGAVKGAKGGSVEFRVEKAGIVQAGIGKASFSAEKLVENVKALADAVAKAKPAGAKGTYVQRIAVSSTMGPGVKVEPGTVLG.

This sequence belongs to the universal ribosomal protein uL1 family. As to quaternary structure, part of the 50S ribosomal subunit.

In terms of biological role, binds directly to 23S rRNA. The L1 stalk is quite mobile in the ribosome, and is involved in E site tRNA release. Functionally, protein L1 is also a translational repressor protein, it controls the translation of the L11 operon by binding to its mRNA. This Nitrobacter winogradskyi (strain ATCC 25391 / DSM 10237 / CIP 104748 / NCIMB 11846 / Nb-255) protein is Large ribosomal subunit protein uL1.